We begin with the raw amino-acid sequence, 361 residues long: Homeobox protein knotted-1-like 6 (361 aa).

The tract at residues 11–48 is disordered; that stretch reads VGASGVHGGHQHQHHHHPWGSSLSAIVAPPPPPQLQQQ. A compositionally biased stretch (basic residues) spans 19 to 28; that stretch reads GHQHQHHHHP. Residues 242-262 enclose the ELK domain; it reads ELKHHLLKKYSGYLSSLKQEL. A DNA-binding region (homeobox; TALE-type) is located at residues 263 to 326; that stretch reads SKKKKKGKLP…NQRKRHWKPS (64 aa).

The protein belongs to the TALE/KNOX homeobox family. In terms of assembly, interacts with FTIP7. Expressed predominantly in shoot apices. Also found to a lesser extent in glumes.

Its subcellular location is the nucleus. It is found in the cytoplasm. Transcription factor that regulates genes involved in development. May be involved in shoot formation during embryogenesis. Overexpression in transgenic plants causes altered leaf morphology. Regulates anther dehiscence via direct repression of the auxin biosynthetic gene YUCCA4. Binds to the DNA sequence 5'-TGAC-3' in the promoter of the YUCCA4 gene and represses its activity during anther development. Reduction of auxin levels at late stage of anther development, after meiosis of microspore mother cells, is necessary for normal anther dehiscence and seed setting. The polypeptide is Homeobox protein knotted-1-like 6 (OSH1) (Oryza sativa subsp. japonica (Rice)).